The sequence spans 297 residues: MARSDEDSWDLASSVGATATMVAAARAVASRGPEALIDDPYADALVRAVGVEYFVKLLDGEITLEADNAAMLAVMTDVMAVRTRFFDDFFLSSGLPQAVILASGLDARAYRLPWPSGSVVYEIDQPEVIEFKTRTLADLGASPAAELRTVAIDLRDDWPRALRDRGFDPTAPTAWIAEGLLIYLPPDAQDRLFDNITALSAPGSRLATEFHPDAGARIGASSQRMAEEWRRHGLDLDMADLFYDGERNPVVDYLRERGWEVEARSRPDMFAHYGRPFPTGEAVEALRQSLAVTATRR.

S-adenosyl-L-methionine is bound by residues Asp124 and 153–154 (DL).

This sequence belongs to the UPF0677 family.

In terms of biological role, exhibits S-adenosyl-L-methionine-dependent methyltransferase activity. The polypeptide is Putative S-adenosyl-L-methionine-dependent methyltransferase Mjls_1072 (Mycobacterium sp. (strain JLS)).